The chain runs to 446 residues: ATP-dependent protease ATPase subunit HslU (446 aa).

Residues Ile17, 59 to 64, Asp255, Glu320, and Arg392 contribute to the ATP site; that span reads GVGKTE.

It belongs to the ClpX chaperone family. HslU subfamily. In terms of assembly, a double ring-shaped homohexamer of HslV is capped on each side by a ring-shaped HslU homohexamer. The assembly of the HslU/HslV complex is dependent on binding of ATP.

The protein localises to the cytoplasm. In terms of biological role, ATPase subunit of a proteasome-like degradation complex; this subunit has chaperone activity. The binding of ATP and its subsequent hydrolysis by HslU are essential for unfolding of protein substrates subsequently hydrolyzed by HslV. HslU recognizes the N-terminal part of its protein substrates and unfolds these before they are guided to HslV for hydrolysis. The protein is ATP-dependent protease ATPase subunit HslU of Pseudomonas fluorescens (strain ATCC BAA-477 / NRRL B-23932 / Pf-5).